Consider the following 102-residue polypeptide: Small ribosomal subunit protein uS10 (102 aa).

This sequence belongs to the universal ribosomal protein uS10 family. As to quaternary structure, part of the 30S ribosomal subunit.

In terms of biological role, involved in the binding of tRNA to the ribosomes. This Streptococcus pyogenes serotype M12 (strain MGAS2096) protein is Small ribosomal subunit protein uS10.